A 432-amino-acid polypeptide reads, in one-letter code: Adenylosuccinate synthetase (432 aa).

GTP contacts are provided by residues 12–18 and 40–42; these read GDEGKGK and GHT. The Proton acceptor role is filled by aspartate 13. Residues aspartate 13 and glycine 40 each contribute to the Mg(2+) site. Residues 13 to 16, 38 to 41, threonine 130, arginine 144, glutamine 225, threonine 240, and arginine 304 each bind IMP; these read DEGK and NAGH. The active-site Proton donor is the histidine 41. A substrate-binding site is contributed by 300–306; sequence ATTGRPR. Residues arginine 306, 332–334, and 414–416 contribute to the GTP site; these read KLD and SVG.

This sequence belongs to the adenylosuccinate synthetase family. As to quaternary structure, homodimer. Mg(2+) is required as a cofactor.

It localises to the cytoplasm. It carries out the reaction IMP + L-aspartate + GTP = N(6)-(1,2-dicarboxyethyl)-AMP + GDP + phosphate + 2 H(+). It participates in purine metabolism; AMP biosynthesis via de novo pathway; AMP from IMP: step 1/2. Plays an important role in the de novo pathway of purine nucleotide biosynthesis. Catalyzes the first committed step in the biosynthesis of AMP from IMP. The protein is Adenylosuccinate synthetase of Anaeromyxobacter dehalogenans (strain 2CP-C).